Consider the following 688-residue polypeptide: Ethylmalonyl-CoA mutase (688 aa).

The region spanning 530–659 (TPRLVVGKPG…VGLAKVVERA (130 aa)) is the B12-binding domain. Position 543 (histidine 543) interacts with adenosylcob(III)alamin. A disordered region spans residues 666 to 688 (DRADTEAGVPGAPKRNESGAQVF).

Belongs to the methylmalonyl-CoA mutase family. The cofactor is adenosylcob(III)alamin.

It catalyses the reaction (2R)-ethylmalonyl-CoA = (2S)-methylsuccinyl-CoA. Its function is as follows. Radical enzyme that catalyzes the transformation of (2R)-ethylmalonyl-CoA to (2S)-methylsuccinyl-CoA. Is involved in the ethylmalonyl-CoA pathway for acetyl-CoA assimilation required for M.extorquens growth on one- and two-carbon compounds such as ethylamine, methanol or ethanol as sole carbon source. This enzyme acts as a regulatory metabolic control point in this pathway, that allows M.extorquens to efficiently restore metabolic balance when challenged with a sudden change in the growth substrate. In Methylorubrum extorquens (strain ATCC 14718 / DSM 1338 / JCM 2805 / NCIMB 9133 / AM1) (Methylobacterium extorquens), this protein is Ethylmalonyl-CoA mutase.